A 200-amino-acid chain; its full sequence is MDSSTAHSPVFLVFPPEITASEYESTELSATTFSTQSPLQKLFARKMKILGTIQILFGIMTFSFGVIFLFTLLKPYPRFPFIFLSGYPFWGSVLFINSGAFLIAVKRKTTETLIILSRIMNFLSALGAIAGIILLTFGFILDQNYICGYSHQNSQCKAVTVLFLGILITLMTFSIIELFISLPFSILGCHSEDCDCEQCC.

The Cytoplasmic segment spans residues 1–52; the sequence is MDSSTAHSPVFLVFPPEITASEYESTELSATTFSTQSPLQKLFARKMKILGT. The helical transmembrane segment at 53 to 73 threads the bilayer; the sequence is IQILFGIMTFSFGVIFLFTLL. The Extracellular portion of the chain corresponds to 74-80; it reads KPYPRFP. Residues 81-101 form a helical membrane-spanning segment; sequence FIFLSGYPFWGSVLFINSGAF. At 102-120 the chain is on the cytoplasmic side; it reads LIAVKRKTTETLIILSRIM. The helical transmembrane segment at 121–141 threads the bilayer; it reads NFLSALGAIAGIILLTFGFIL. Residues 142–159 are Extracellular-facing; that stretch reads DQNYICGYSHQNSQCKAV. Residues 160–180 form a helical membrane-spanning segment; sequence TVLFLGILITLMTFSIIELFI. At 181-200 the chain is on the cytoplasmic side; the sequence is SLPFSILGCHSEDCDCEQCC.

Belongs to the MS4A family. As to expression, expressed at high level in the testis. Detected also in the pancreas, heart and in the brain.

It is found in the membrane. Its function is as follows. May be involved in signal transduction as a component of a multimeric receptor complex. The protein is Membrane-spanning 4-domains subfamily A member 5 (MS4A5) of Homo sapiens (Human).